Here is a 155-residue protein sequence, read N- to C-terminus: Small ribosomal subunit protein uS7cz/uS7cy (155 aa).

It belongs to the universal ribosomal protein uS7 family. Part of the 30S ribosomal subunit.

It is found in the plastid. It localises to the chloroplast. In terms of biological role, one of the primary rRNA binding proteins, it binds directly to 16S rRNA where it nucleates assembly of the head domain of the 30S subunit. In Atropa belladonna (Belladonna), this protein is Small ribosomal subunit protein uS7cz/uS7cy (rps7-A).